The sequence spans 870 residues: Lon protease (870 aa).

The region spanning 1-270 (MPTNSYRFLV…KLYEHIHTFA (270 aa)) is the Lon N-terminal domain. An ATP-binding site is contributed by 454-461 (GPPGTGKT). Residues 691–870 (SPQIGTVTGL…YQQIYDFIFK (180 aa)) form the Lon proteolytic domain. Active-site residues include Ser777 and Lys820.

It belongs to the peptidase S16 family. In terms of assembly, homohexamer. Organized in a ring with a central cavity.

The protein resides in the cytoplasm. It carries out the reaction Hydrolysis of proteins in presence of ATP.. ATP-dependent serine protease that mediates the selective degradation of mutant and abnormal proteins as well as certain short-lived regulatory proteins. Required for cellular homeostasis and for survival from DNA damage and developmental changes induced by stress. Degrades polypeptides processively to yield small peptide fragments that are 5 to 10 amino acids long. Binds to DNA in a double-stranded, site-specific manner. This chain is Lon protease, found in Mesomycoplasma hyopneumoniae (strain 232) (Mycoplasma hyopneumoniae).